The primary structure comprises 110 residues: U-scoloptoxin(16)-Er6a (110 aa).

Residues 1 to 26 form the signal peptide; that stretch reads MTSTRKLSVSCLIVFMVSSLIAVSSG.

Belongs to the scoloptoxin-16 family. Contains 4 disulfide bonds. As to expression, expressed by the venom gland.

It localises to the secreted. The polypeptide is U-scoloptoxin(16)-Er6a (Ethmostigmus rubripes (Giant centipede)).